The chain runs to 474 residues: Coiled-coil domain-containing protein 174 (474 aa).

2 disordered regions span residues 39–86 and 129–170; these read GVFG…REKL and GATR…PSEE. Composition is skewed to basic and acidic residues over residues 64–86 and 129–142; these read RAEKDAEQKLEEQKTLDKSREKL and GATRDSRIKEERDA. Residues 64–98 are a coiled coil; the sequence is RAEKDAEQKLEEQKTLDKSREKLEEKAKLYEKMTK. Positions 148-157 are enriched in acidic residues; sequence NDDDDEEEFS. S206 is modified (phosphoserine). Residues 276 to 317 are a coiled coil; that stretch reads LEMLREQTTDQRIKRENIKEKRKAILEARLAKLRQKKMKKSK. 2 disordered regions span residues 309–372 and 389–461; these read RQKK…IREW and ELRA…VTFQ. Basic and acidic residues-rich tracts occupy residues 316 to 327 and 356 to 372; these read SKVDGTEEESRA and IQERKDSKPGVPHIREW. The span at 410-419 shows a compositional bias: polar residues; it reads RTGSLSSQPW. Residues 430 to 453 are compositionally biased toward low complexity; sequence GHSSGQSQEPSSSHTSTPASESSP.

The protein localises to the nucleus. Its function is as follows. Probably involved in neuronal development. The sequence is that of Coiled-coil domain-containing protein 174 (Ccdc174) from Rattus norvegicus (Rat).